The chain runs to 157 residues: Peroxiredoxin Bcp (157 aa).

The region spanning 3 to 156 (IEIGQKAPDL…ALQTLKDMSE (154 aa)) is the Thioredoxin domain. Residue Cys-45 is the Cysteine sulfenic acid (-SOH) intermediate of the active site. A disulfide bond links Cys-45 and Cys-50.

This sequence belongs to the peroxiredoxin family. BCP/PrxQ subfamily. In terms of assembly, monomer.

The enzyme catalyses a hydroperoxide + [thioredoxin]-dithiol = an alcohol + [thioredoxin]-disulfide + H2O. Functionally, thiol-specific peroxidase that catalyzes the reduction of hydrogen peroxide and organic hydroperoxides to water and alcohols, respectively. Plays a role in cell protection against oxidative stress by detoxifying peroxides and as sensor of hydrogen peroxide-mediated signaling events. This is Peroxiredoxin Bcp (ygaF) from Bacillus subtilis (strain 168).